The sequence spans 217 residues: Octanoyltransferase (217 aa).

In terms of domain architecture, BPL/LPL catalytic spans 32-207 (SESHDELWIV…TFSQLLGYQH (176 aa)). Substrate contacts are provided by residues 71–78 (RGGQVTYH), 138–140 (SLG), and 151–153 (GLA). The active-site Acyl-thioester intermediate is the cysteine 169.

This sequence belongs to the LipB family.

Its subcellular location is the cytoplasm. The catalysed reaction is octanoyl-[ACP] + L-lysyl-[protein] = N(6)-octanoyl-L-lysyl-[protein] + holo-[ACP] + H(+). Its pathway is protein modification; protein lipoylation via endogenous pathway; protein N(6)-(lipoyl)lysine from octanoyl-[acyl-carrier-protein]: step 1/2. Functionally, catalyzes the transfer of endogenously produced octanoic acid from octanoyl-acyl-carrier-protein onto the lipoyl domains of lipoate-dependent enzymes. Lipoyl-ACP can also act as a substrate although octanoyl-ACP is likely to be the physiological substrate. The protein is Octanoyltransferase of Shewanella baltica (strain OS155 / ATCC BAA-1091).